The chain runs to 520 residues: MDVALEDNHIALLQHRAKNSGNTVLFKLPILRGSEPPQEWNHITVAEFAAEVDRVAIFVMTELKARGIPPRSAVTVLYSGSRYQDLIYAIALARASYIPQMCPHILTHPGVIFALMEKAGSKIILYDPSLEPATTDCPYPKMALNPIETIDSSSTINSDSALPTIEDLSSGHADVCFFYLTSGSTSGSPKVVPLTQKFVSTYYKTQFGIWLDGRRFDTQNAFLSRGSICAVAPIIQYFGCLYTGSCIVQPSKMRFSTEELLTLVNVCGLNRMTTFGTWLAPHIQAAKKDPAALKLLQEMRTVSYGGVPISIADDDWCFQNGIPLMDMYATTECGTLMVSAPGKPARFMQPVPGISYRFDPFTDTTTGADNPASTQLLKLILLADSPQIPQPQLLSEDGNFHTGDLFEKQLDGSYLFRGRGDDWIKSEDSRFIDTKAIEEKINDVCSDLVKGCIVVGHLRPSPALFIEAYHDSISTISEDGLKELVLRRLEDFNARQLKHERITDKRLIFIVDEGNLPRTV.

180 to 191 provides a ligand contact to ATP; the sequence is LTSGSTSGSPKV. The FACS signature appears at 397 to 447; that stretch reads DGNFHTGDLFEKQLDGSYLFRGRGDDWIKSEDSRFIDTKAIEEKINDVCSD.

The protein belongs to the ATP-dependent AMP-binding enzyme family. Mg(2+) serves as cofactor.

Its pathway is secondary metabolite biosynthesis. In terms of biological role, AMP-binding domain-containing enzyme; part of the gene cluster that mediates the biosynthesis of the psychoactive metabolites ibotenic acid and muscimol. The first committed step is glutamate hydroxylation by the 2-oxoglutarate-dependent dioxygenase iboH, and the last step is decarboxylation of ibotenic acid to muscimol by the decarboxylase iboD. The order of the intermediate reactions is somewhat ambiguous. IboA likely activates the carboxylic acid at position 5 to introduce an amide bond, and the flavin monooxygenase iboF generates the N-O bond. There are several options for the latter step. One option is that iboF directly hydroxylates the amide nitrogen formed by iboA to produce a hydroxamic acid species. Another option is that iboF hydroxylates an external N-containing compound, whose resulting N-O bond is subsequently introduced into the hydroxyglutamate scaffold. The paralogous PLP-dependent cystathionine gamma-synthase-like enzymes iboG1 and iboG2 are likely involved in substitution of the OH group at position 3 by the O-N moiety. The first cyclic intermediate is most probably tricholomic acid which is likely desaturated to ibotenic acid by the cytochrome P450 monooxygenase iboC. This is AMP-binding domain-containing enzyme iboA from Amanita muscaria (strain Koide BX008).